A 162-amino-acid chain; its full sequence is uncharacterized protein (162 aa).

5 helical membrane passes run 15–40 (TIYSIVGIFLIIILDVTVAVALYFLL), 47–66 (ISMLMSLFRIVYAAIFTTAL), 76–98 (YSILDLGYIFFGIHLFLLGFLVY), 105–124 (KWLGALIFIASTGYIIDPLL), and 128–150 (GYAVEIGMYTFFGEVLFAFWLVI).

It is found in the cell membrane. This is an uncharacterized protein from Archaeoglobus fulgidus (strain ATCC 49558 / DSM 4304 / JCM 9628 / NBRC 100126 / VC-16).